The following is a 410-amino-acid chain: BTB and MATH domain-containing protein 42 (410 aa).

The segment covering 1 to 19 has biased composition (polar residues); sequence MSSRSSWSSTEQINRTISS. The interval 1–29 is disordered; it reads MSSRSSWSSTEQINRTISSRADDLPPQPR. The 129-residue stretch at 45 to 173 folds into the MATH domain; that stretch reads STKLEWKIEQ…DGTLFLICEV (129 aa). In terms of domain architecture, BTB spans 219-287; the sequence is TDCVIHVGNK…MYTGATESLE (69 aa). The disordered stretch occupies residues 389–410; the sequence is TSNIPISVSPPPARKRLRRSAK. Residues 401-410 are compositionally biased toward basic residues; that stretch reads ARKRLRRSAK.

As to quaternary structure, interacts with cul-3.

It functions in the pathway protein modification; protein ubiquitination. In terms of biological role, probable substrate-specific adapter of an E3 ubiquitin-protein ligase complex which mediates the ubiquitination and subsequent proteasomal degradation of target proteins. This is BTB and MATH domain-containing protein 42 (bath-42) from Caenorhabditis elegans.